A 383-amino-acid polypeptide reads, in one-letter code: Protein COS7 (383 aa).

The Cytoplasmic portion of the chain corresponds to 1 to 42; the sequence is MKENEVKDEKSVDVLSFKQLESQKIVLPQDLFRSSFTWFCYE. Residues 43-63 traverse the membrane as a helical segment; that stretch reads IYKSLAFRIWMLLWLPLSVWW. Topologically, residues 64–72 are extracellular; the sequence is KLSNNCIYP. Residues 73 to 93 form a helical membrane-spanning segment; sequence LIVSLLVLFLGPIFVLVICGL. At 94–232 the chain is on the cytoplasmic side; the sequence is SRKRSLSKQL…RSKLTWFLKR (139 aa). The chain crosses the membrane as a helical span at residues 233–253; the sequence is IFTIYSLPLWLAFLNCICVSQ. His-254 is a topological domain (extracellular). A helical membrane pass occupies residues 255-275; it reads FCLAFRILCPGLFFLMMVWLF. Residues 276–383 lie on the Cytoplasmic side of the membrane; it reads QNMRTTALLV…SRNEESLMKK (108 aa).

The protein belongs to the DUP/COS family.

The protein resides in the membrane. This chain is Protein COS7 (COS7), found in Saccharomyces cerevisiae (strain ATCC 204508 / S288c) (Baker's yeast).